The primary structure comprises 441 residues: Adenylyltransferase and sulfurtransferase MOCS3 (441 aa).

Residues Gly83, Asp104, 111–115 (TNLHR), Lys128, and 172–173 (DN) contribute to the ATP site. Residues Cys213 and Cys216 each coordinate Zn(2+). Cys230 serves as the catalytic Glycyl thioester intermediate; for adenylyltransferase activity. Zn(2+) contacts are provided by Cys288 and Cys291. Residues 339 to 439 (AGRDHLLVDV…WTKTIDPNFP (101 aa)) enclose the Rhodanese domain. Cys395 acts as the Cysteine persulfide intermediate; for sulfurtransferase activity in catalysis.

The protein in the N-terminal section; belongs to the HesA/MoeB/ThiF family. UBA4 subfamily. Requires Zn(2+) as cofactor.

It is found in the cytoplasm. It catalyses the reaction [molybdopterin-synthase sulfur-carrier protein]-C-terminal Gly-Gly + ATP + H(+) = [molybdopterin-synthase sulfur-carrier protein]-C-terminal Gly-Gly-AMP + diphosphate. The catalysed reaction is [molybdopterin-synthase sulfur-carrier protein]-C-terminal Gly-Gly-AMP + S-sulfanyl-L-cysteinyl-[cysteine desulfurase] + AH2 = [molybdopterin-synthase sulfur-carrier protein]-C-terminal-Gly-aminoethanethioate + L-cysteinyl-[cysteine desulfurase] + A + AMP + 2 H(+). It functions in the pathway tRNA modification; 5-methoxycarbonylmethyl-2-thiouridine-tRNA biosynthesis. Its pathway is cofactor biosynthesis; molybdopterin biosynthesis. Its function is as follows. Plays a central role in 2-thiolation of mcm(5)S(2)U at tRNA wobble positions of cytosolic tRNA(Lys), tRNA(Glu) and tRNA(Gln). Also essential during biosynthesis of the molybdenum cofactor. Acts by mediating the C-terminal thiocarboxylation of sulfur carriers URM1 and MOCS2A. Its N-terminus first activates URM1 and MOCS2A as acyl-adenylates (-COAMP), then the persulfide sulfur on the catalytic cysteine is transferred to URM1 and MOCS2A to form thiocarboxylation (-COSH) of their C-terminus. The reaction probably involves hydrogen sulfide that is generated from the persulfide intermediate and that acts as a nucleophile towards URM1 and MOCS2A. Subsequently, a transient disulfide bond is formed. Does not use thiosulfate as sulfur donor; NFS1 probably acting as a sulfur donor for thiocarboxylation reactions. In Anopheles gambiae (African malaria mosquito), this protein is Adenylyltransferase and sulfurtransferase MOCS3.